Consider the following 462-residue polypeptide: ATP synthase subunit beta (462 aa).

151–158 (GGAGVGKT) lines the ATP pocket.

The protein belongs to the ATPase alpha/beta chains family. In terms of assembly, F-type ATPases have 2 components, CF(1) - the catalytic core - and CF(0) - the membrane proton channel. CF(1) has five subunits: alpha(3), beta(3), gamma(1), delta(1), epsilon(1). CF(0) has four main subunits: a(1), b(1), b'(1) and c(9-12).

The protein resides in the cell inner membrane. The catalysed reaction is ATP + H2O + 4 H(+)(in) = ADP + phosphate + 5 H(+)(out). Produces ATP from ADP in the presence of a proton gradient across the membrane. The catalytic sites are hosted primarily by the beta subunits. The protein is ATP synthase subunit beta of Chlorobium chlorochromatii (strain CaD3).